The sequence spans 407 residues: 4-hydroxybenzoate polyprenyltransferase, mitochondrial (407 aa).

The transit peptide at 1-20 directs the protein to the mitochondrion; the sequence is MAFFGLSRVSRRLLKSSVSV. The next 6 membrane-spanning stretches (helical) occupy residues 137-157, 162-182, 210-230, 254-274, 279-299, and 330-350; these read IGTWLLAWPCMWSIALAADPG, FKYMALFGCGALLLRGAGCTI, FQGIGFLGLQLLLGLGILLQL, FTFWPQAFLGLTINWGALLGW, GSIAPSIVLPLYLSGVCWTLV, and LWLTGFGTASIGFLALSGFSA.

It belongs to the UbiA prenyltransferase family. Mg(2+) is required as a cofactor. As to expression, expressed in flowers.

It is found in the mitochondrion inner membrane. The catalysed reaction is an all-trans-polyprenyl diphosphate + 4-hydroxybenzoate = a 4-hydroxy-3-(all-trans-polyprenyl)benzoate + diphosphate. It functions in the pathway cofactor biosynthesis; ubiquinone biosynthesis. Catalyzes the prenylation of para-hydroxybenzoate (PHB) with an all-trans polyprenyl group. Mediates the second step in the final reaction sequence of coenzyme Q (CoQ) biosynthesis, which is the condensation of the polyisoprenoid side chain with PHB, generating the first membrane-bound Q intermediate. Required for embryo development. This chain is 4-hydroxybenzoate polyprenyltransferase, mitochondrial, found in Arabidopsis thaliana (Mouse-ear cress).